A 227-amino-acid polypeptide reads, in one-letter code: Probable septum site-determining protein MinC (227 aa).

This sequence belongs to the MinC family. In terms of assembly, interacts with MinD and FtsZ.

Functionally, cell division inhibitor that blocks the formation of polar Z ring septums. Rapidly oscillates between the poles of the cell to destabilize FtsZ filaments that have formed before they mature into polar Z rings. Prevents FtsZ polymerization. This is Probable septum site-determining protein MinC from Bacillus pumilus (strain SAFR-032).